We begin with the raw amino-acid sequence, 391 residues long: Zinc finger protein DPF3 (391 aa).

A compositionally biased stretch (acidic residues) spans 152 to 165 (ENGDGFHDDEDFEV). Disordered stretches follow at residues 152–200 (ENGD…PYVC) and 236–266 (LAEE…QKAP). Basic residues predominate over residues 169–183 (KRKHRNKGRGRGSGR). A C2H2-type zinc finger spans residues 198-235 (YVCDNRYKQKHNSKTADSVCGKRYKNRPGLSYHYAHTH). PHD-type zinc fingers lie at residues 273-333 (NDYC…CKSC) and 330-380 (CKSC…CQNL).

As to quaternary structure, component of the BAF complex. Interacts with acetylated histones H3 and H4. Component of neuron-specific chromatin remodeling complex (nBAF complex), a subfamily of ATP-dependent SWI/SNF chromatin remodeling complexes. In terms of tissue distribution, expressed in the heart and somites.

It is found in the nucleus. Its function is as follows. Muscle-specific component of the BAF complex, a multiprotein complex involved in transcriptional activation and repression of select genes by chromatin remodeling (alteration of DNA-nucleosome topology). Specifically binds acetylated lysines on histone 3 and 4. In the complex, it acts as a tissue-specific anchor between histone acetylations and methylations and chromatin remodeling. Belongs to the neuron-specific chromatin remodeling complex (nBAF complex) and may play a role in neural development. Plays an essential role in heart and skeletal muscle development. The sequence is that of Zinc finger protein DPF3 (dpf3) from Danio rerio (Zebrafish).